Consider the following 371-residue polypeptide: Chitin deacetylase (371 aa).

Positions 1 to 20 are cleaved as a signal peptide; sequence MLCRLFTLFITAALACCVAA. Positions 73–112 are disordered; the sequence is PKPEPEPTAVPTMAPEPTTVPPTEPSGTYPPETTPTVEPT. 2 stretches are compositionally biased toward low complexity: residues 79 to 89 and 102 to 112; these read PTAVPTMAPEP and PPETTPTVEPT. A disulfide bond links Cys164 and Cys358. An N-linked (GlcNAc...) asparagine glycan is attached at Asn167. Residues 168 to 353 form the NodB homology domain; that stretch reads GTIALTFDDG…EIKKRGLRAV (186 aa). Asp175 acts as the Proton acceptor in catalysis. An acetate-binding site is contributed by Asp175. Asp176, His228, and His232 together coordinate Co(2+). N-linked (GlcNAc...) asparagine glycosylation occurs at Asn239. Tyr270 contributes to the acetate binding site. Catalysis depends on His327, which acts as the Proton donor.

It belongs to the polysaccharide deacetylase family. The cofactor is Co(2+).

It carries out the reaction [(1-&gt;4)-N-acetyl-beta-D-glucosaminyl](n) + n H2O = chitosan + n acetate. In terms of biological role, hydrolyzes the N-acetamido groups of N-acetyl-D-glucosamine residues in chitin to form chitosan and acetate. This Arthroderma benhamiae (strain ATCC MYA-4681 / CBS 112371) (Trichophyton mentagrophytes) protein is Chitin deacetylase.